We begin with the raw amino-acid sequence, 206 residues long: Protein Ta0236 (206 aa).

Positions 16-205 (DIGTKAVRLA…EKDPEGVVEK (190 aa)) constitute an AMMECR1 domain.

This is Protein Ta0236 from Thermoplasma acidophilum (strain ATCC 25905 / DSM 1728 / JCM 9062 / NBRC 15155 / AMRC-C165).